The following is a 441-amino-acid chain: FBD-associated F-box protein At5g18780 (441 aa).

The F-box domain occupies 10 to 56; the sequence is EDRISILPEPLLCHILSFLRTKDSVRTSVLSSRWRDLWLWVPRLDLD. The region spanning 366-410 is the FBD domain; sequence LPRCLISSLASVDIESPITDKATELKLVSYLLENSTTLKKLVLRL.

This chain is FBD-associated F-box protein At5g18780, found in Arabidopsis thaliana (Mouse-ear cress).